The sequence spans 567 residues: Beta-galactoside-specific lectin 2 (567 aa).

A signal peptide spans 1–33; the sequence is MNARLASSRAWVWCFLMVGLVCGATAKAESKIN. Asn145 is a glycosylation site (N-linked (GlcNAc...) asparagine). The active site involves Glu198. Disulfide bonds link Cys280–Cys306 and Cys322–Cys341. Positions 288–301 are cleaved as a propeptide — connecting peptide; it reads DVHNWPLVIRPVMV. The Ricin B-type lectin 1 domain occupies 309–439; the sequence is SEPTVRIVGR…DSLGQSWLAS (131 aa). 324 to 326 contributes to the D-galactose binding site; that stretch reads DVR. Asn362 carries an N-linked (GlcNAc...) asparagine glycan. An intrachain disulfide couples Cys365 to Cys382. Asn440 carries N-linked (GlcNAc...) asparagine glycosylation. Residues 443–566 enclose the Ricin B-type lectin 2 domain; the sequence is APREVTIYGF…GNPNQMWLPV (124 aa). Disulfide bonds link Cys456–Cys469 and Cys495–Cys512. 539–541 lines the D-galactose pocket; the sequence is DVR.

Belongs to the ribosome-inactivating protein family. Type 2 RIP subfamily. As to quaternary structure, disulfide-linked dimer of A and B chains.

It carries out the reaction Endohydrolysis of the N-glycosidic bond at one specific adenosine on the 28S rRNA.. The A chain is responsible for inhibiting protein synthesis through the catalytic inactivation of 60S ribosomal subunits by removing adenine from position 4,324 of 28S rRNA. The B chain binds to cell receptors and probably facilitates the entry into the cell of the A chain; B chains are also responsible for cell agglutination (lectin activity). The polypeptide is Beta-galactoside-specific lectin 2 (Viscum album (European mistletoe)).